Here is a 420-residue protein sequence, read N- to C-terminus: Serine hydroxymethyltransferase (420 aa).

(6S)-5,6,7,8-tetrahydrofolate is bound by residues leucine 121 and 125-127 (GHL). Lysine 229 is subject to N6-(pyridoxal phosphate)lysine. 355–357 (SPF) is a binding site for (6S)-5,6,7,8-tetrahydrofolate.

It belongs to the SHMT family. In terms of assembly, homodimer. It depends on pyridoxal 5'-phosphate as a cofactor.

The protein localises to the cytoplasm. The enzyme catalyses (6R)-5,10-methylene-5,6,7,8-tetrahydrofolate + glycine + H2O = (6S)-5,6,7,8-tetrahydrofolate + L-serine. It participates in one-carbon metabolism; tetrahydrofolate interconversion. It functions in the pathway amino-acid biosynthesis; glycine biosynthesis; glycine from L-serine: step 1/1. Catalyzes the reversible interconversion of serine and glycine with tetrahydrofolate (THF) serving as the one-carbon carrier. This reaction serves as the major source of one-carbon groups required for the biosynthesis of purines, thymidylate, methionine, and other important biomolecules. Also exhibits THF-independent aldolase activity toward beta-hydroxyamino acids, producing glycine and aldehydes, via a retro-aldol mechanism. This is Serine hydroxymethyltransferase from Chromohalobacter salexigens (strain ATCC BAA-138 / DSM 3043 / CIP 106854 / NCIMB 13768 / 1H11).